The primary structure comprises 197 residues: Dephospho-CoA kinase (197 aa).

Positions 2-197 constitute a DPCK domain; that stretch reads IIGLTGGIAS…GAIKDLANLV (196 aa). ATP is bound at residue 10–15; the sequence is ASGKST.

Belongs to the CoaE family.

The protein resides in the cytoplasm. It carries out the reaction 3'-dephospho-CoA + ATP = ADP + CoA + H(+). The protein operates within cofactor biosynthesis; coenzyme A biosynthesis; CoA from (R)-pantothenate: step 5/5. Its function is as follows. Catalyzes the phosphorylation of the 3'-hydroxyl group of dephosphocoenzyme A to form coenzyme A. The chain is Dephospho-CoA kinase from Streptococcus thermophilus (strain ATCC BAA-250 / LMG 18311).